A 175-amino-acid polypeptide reads, in one-letter code: MVSLKDSHFDLFHLPAQFALDEAALDAAYRAVQTQVHPDRFAAAGDAQKRIAMQWATRANEAYRTLRDPLKRATYLLSLRGVDIGAENNTAMEPAFLMQQMEWRESIEDAAAARNVDALDALLAELRDEKRARLERLGTLLDSGADQAAAEAVRQLMFIERVASEVGAQIERLET.

Residues 7–79 (SHFDLFHLPA…LKRATYLLSL (73 aa)) form the J domain.

It belongs to the HscB family. In terms of assembly, interacts with HscA and stimulates its ATPase activity.

In terms of biological role, co-chaperone involved in the maturation of iron-sulfur cluster-containing proteins. Seems to help targeting proteins to be folded toward HscA. This chain is Co-chaperone protein HscB homolog, found in Burkholderia multivorans (strain ATCC 17616 / 249).